A 616-amino-acid chain; its full sequence is Protein SpAN (616 aa).

The first 16 residues, Met1–Cys16, serve as a signal peptide directing secretion. Residues Ser17–Lys93 constitute a propeptide, activation peptide. The tract at residues Met30–Asp67 is disordered. The Peptidase M12A domain occupies Lys93 to Asp294. 6 disulfides stabilise this stretch: Cys134/Cys293, Cys162/Cys182, Cys299/Cys317, Cys319/Cys328, Cys340/Cys366, and Cys393/Cys413. His190 serves as a coordination point for Zn(2+). Residue Glu191 is part of the active site. Positions 194 and 200 each coordinate Zn(2+). Residues Arg289 to Gln329 enclose the EGF-like domain. The 111-residue stretch at Cys340–Ile450 folds into the CUB 1 domain. Residues Thr461–Thr491 form a disordered region. 2 disulfides stabilise this stretch: Cys503–Cys529 and Cys556–Cys576. The CUB 2 domain occupies Cys503–Ile614.

It depends on Zn(2+) as a cofactor. As to expression, asymmetrically along the animal-vegetal axis of the blastula.

The polypeptide is Protein SpAN (SPAN) (Strongylocentrotus purpuratus (Purple sea urchin)).